The sequence spans 276 residues: Cruxhalorhodopsin-3 (276 aa).

Positions 1 to 21 (MPAASTAATTLLQASQSEVLG) are excised as a propeptide. Over 22 to 25 (EIQS) the chain is Extracellular. Residues 26-51 (NFLLNSSLWVNIALAGVVILLFVAMG) form a helical membrane-spanning segment. Residues 52–57 (RELESS) are Cytoplasmic-facing. The chain crosses the membrane as a helical span at residues 58–81 (RAKLIWVATMLVPLVSISSYAGLA). Residues 82–105 (SGLTVGFLQMPPGHALAGQEVLSP) are Extracellular-facing. Residues 106-127 (WGRYLTWTFSTPMILLALGLLA) form a helical membrane-spanning segment. The Cytoplasmic portion of the chain corresponds to 128–130 (DTD). A helical membrane pass occupies residues 131–154 (MASLFTAITMDIGMCITGLAAALV). Topologically, residues 155-157 (TSS) are extracellular. The helical transmembrane segment at 158 to 180 (HLLRWVFYGISCAFFIAVLYVLL) threads the bilayer. The Cytoplasmic segment spans residues 181–192 (VEWPADAEAAGT). Residues 193 to 216 (SEIFGTLKLLTVVLWLGYPILWAL) traverse the membrane as a helical segment. At 217–225 (GSEGVALLS) the chain is on the extracellular side. The helical transmembrane segment at 226 to 254 (VGVTSWGYSGLDILAKYVFAFLLLRWVAA) threads the bilayer. The residue at position 241 (Lys241) is an N6-(retinylidene)lysine. The Cytoplasmic portion of the chain corresponds to 255 to 276 (NEDTVTQAGMSLGSGGAAPADD).

Belongs to the archaeal/bacterial/fungal opsin family.

It localises to the cell membrane. Light-driven chloride pump. In Haloarcula vallismortis (Halobacterium vallismortis), this protein is Cruxhalorhodopsin-3 (choP3).